The chain runs to 764 residues: Nucleolar complex-associated protein 2 (764 aa).

Residues 3 to 69 (AKDDKKRVKK…EEELKRLQEK (67 aa)) adopt a coiled-coil conformation. Disordered stretches follow at residues 23–67 (ELNN…KRLQ), 89–113 (ATEIEDDADVEPDTDLEDTEKEGDD), 627–646 (AVFGKNAPSSDDEDDEDRME), and 651–726 (AFNS…EDDA). Over residues 30–41 (IDAHDIVMEQKS) the composition is skewed to basic and acidic residues. Over residues 42–51 (DKKRGKKVKS) the composition is skewed to basic residues. Over residues 52–67 (KKAEAEEHEEELKRLQ) the composition is skewed to basic and acidic residues. Residues 90–113 (TEIEDDADVEPDTDLEDTEKEGDD) show a composition bias toward acidic residues. A compositionally biased stretch (basic and acidic residues) spans 661-672 (DSKEKEPEEEKT). Positions 673–680 (KKKKRKRG) match the Nuclear localization signal 1 motif. Positions 673–682 (KKKKRKRGGK) are enriched in basic residues. Residues 693 to 726 (GLGEDDVVEDFVLSSDEEEEDLFDIGGDKDEDDA) are compositionally biased toward acidic residues. The Nuclear localization signal 2 motif lies at 738–745 (SKKTKGTY).

This sequence belongs to the NOC2 family. As to quaternary structure, component of nucleolar complexes. Forms homodimers. Interacts with RBL and NOC3 in both the nucleolus and nucleoplasm. Binds to SWA2.

The protein resides in the nucleus. Its subcellular location is the nucleolus. The protein localises to the nucleoplasm. Together with SWA2, probably involved in pre-ribosome export from the nucleus to the cytoplasm. In Arabidopsis thaliana (Mouse-ear cress), this protein is Nucleolar complex-associated protein 2.